The primary structure comprises 841 residues: Protein translocase subunit SecA (841 aa).

ATP-binding positions include glutamine 86, 104–108, and aspartate 493; that span reads GEGKT. Residues 788–822 are disordered; the sequence is EEVAEGKAVRPSANGQEDKKAKRKPVRKAENIGRN. Residues cysteine 825, cysteine 827, cysteine 836, and cysteine 837 each coordinate Zn(2+).

This sequence belongs to the SecA family. In terms of assembly, monomer and homodimer. Part of the essential Sec protein translocation apparatus which comprises SecA, SecYEG and auxiliary proteins SecDF. Other proteins may also be involved. The cofactor is Zn(2+).

It is found in the cell membrane. The protein resides in the cytoplasm. The catalysed reaction is ATP + H2O + cellular proteinSide 1 = ADP + phosphate + cellular proteinSide 2.. Functionally, part of the Sec protein translocase complex. Interacts with the SecYEG preprotein conducting channel. Has a central role in coupling the hydrolysis of ATP to the transfer of proteins into and across the cell membrane, serving as an ATP-driven molecular motor driving the stepwise translocation of polypeptide chains across the membrane. The chain is Protein translocase subunit SecA from Shouchella clausii (strain KSM-K16) (Alkalihalobacillus clausii).